A 781-amino-acid polypeptide reads, in one-letter code: 5-methyltetrahydropteroyltriglutamate--homocysteine methyltransferase (781 aa).

Residues 20 to 23 (RELK) and Lys131 each bind 5-methyltetrahydropteroyltri-L-glutamate. L-homocysteine contacts are provided by residues 453-455 (IGS) and Glu506. L-methionine is bound by residues 453 to 455 (IGS) and Glu506. Residues 537-538 (RC) and Trp583 contribute to the 5-methyltetrahydropteroyltri-L-glutamate site. Asp621 provides a ligand contact to L-homocysteine. Asp621 provides a ligand contact to L-methionine. Glu627 contributes to the 5-methyltetrahydropteroyltri-L-glutamate binding site. Residues His663, Cys665, and Glu687 each coordinate Zn(2+). His716 serves as the catalytic Proton donor. Residue Cys748 participates in Zn(2+) binding.

The protein belongs to the vitamin-B12 independent methionine synthase family. Requires Zn(2+) as cofactor.

The enzyme catalyses 5-methyltetrahydropteroyltri-L-glutamate + L-homocysteine = tetrahydropteroyltri-L-glutamate + L-methionine. Its pathway is amino-acid biosynthesis; L-methionine biosynthesis via de novo pathway; L-methionine from L-homocysteine (MetE route): step 1/1. Functionally, catalyzes the transfer of a methyl group from 5-methyltetrahydrofolate to homocysteine resulting in methionine formation. This chain is 5-methyltetrahydropteroyltriglutamate--homocysteine methyltransferase, found in Bradyrhizobium diazoefficiens (strain JCM 10833 / BCRC 13528 / IAM 13628 / NBRC 14792 / USDA 110).